Consider the following 271-residue polypeptide: Eukaryotic translation initiation factor 3 subunit G (271 aa).

Disordered stretches follow at residues 1-29 (MPALDDIKSSWADEVESDSGSLPPPSEVI) and 143-185 (KPTK…MRGR). The RRM domain maps to 189-267 (SAIRISNLSE…LILSVEWSKP (79 aa)).

This sequence belongs to the eIF-3 subunit G family. Component of the eukaryotic translation initiation factor 3 (eIF-3) complex.

It localises to the cytoplasm. RNA-binding component of the eukaryotic translation initiation factor 3 (eIF-3) complex, which is involved in protein synthesis of a specialized repertoire of mRNAs and, together with other initiation factors, stimulates binding of mRNA and methionyl-tRNAi to the 40S ribosome. The eIF-3 complex specifically targets and initiates translation of a subset of mRNAs involved in cell proliferation. This subunit can bind 18S rRNA. The sequence is that of Eukaryotic translation initiation factor 3 subunit G from Anopheles gambiae (African malaria mosquito).